A 347-amino-acid polypeptide reads, in one-letter code: RNA 3'-terminal phosphate cyclase (347 aa).

Residues glutamine 101 and 286 to 289 (HMAD) each bind ATP. Histidine 312 (tele-AMP-histidine intermediate) is an active-site residue.

The protein belongs to the RNA 3'-terminal cyclase family. Type 1 subfamily.

The protein localises to the cytoplasm. The catalysed reaction is a 3'-end 3'-phospho-ribonucleotide-RNA + ATP = a 3'-end 2',3'-cyclophospho-ribonucleotide-RNA + AMP + diphosphate. Its function is as follows. Catalyzes the conversion of 3'-phosphate to a 2',3'-cyclic phosphodiester at the end of RNA. The mechanism of action of the enzyme occurs in 3 steps: (A) adenylation of the enzyme by ATP; (B) transfer of adenylate to an RNA-N3'P to produce RNA-N3'PP5'A; (C) and attack of the adjacent 2'-hydroxyl on the 3'-phosphorus in the diester linkage to produce the cyclic end product. The biological role of this enzyme is unknown but it is likely to function in some aspects of cellular RNA processing. This Pyrobaculum neutrophilum (strain DSM 2338 / JCM 9278 / NBRC 100436 / V24Sta) (Thermoproteus neutrophilus) protein is RNA 3'-terminal phosphate cyclase.